A 523-amino-acid chain; its full sequence is Probable malate:quinone oxidoreductase 1 (523 aa).

Belongs to the MQO family. The cofactor is FAD.

The enzyme catalyses (S)-malate + a quinone = a quinol + oxaloacetate. The protein operates within carbohydrate metabolism; tricarboxylic acid cycle; oxaloacetate from (S)-malate (quinone route): step 1/1. In Pseudomonas aeruginosa (strain ATCC 15692 / DSM 22644 / CIP 104116 / JCM 14847 / LMG 12228 / 1C / PRS 101 / PAO1), this protein is Probable malate:quinone oxidoreductase 1.